Consider the following 275-residue polypeptide: Diaminopimelate epimerase (275 aa).

Positions 12, 45, and 65 each coordinate substrate. C74 functions as the Proton donor in the catalytic mechanism. Substrate is bound by residues 75–76, N158, N191, and 209–210; these read GN and ER. The Proton acceptor role is filled by C218. A substrate-binding site is contributed by 219–220; it reads GT.

It belongs to the diaminopimelate epimerase family. Homodimer.

The protein localises to the cytoplasm. It carries out the reaction (2S,6S)-2,6-diaminopimelate = meso-2,6-diaminopimelate. The protein operates within amino-acid biosynthesis; L-lysine biosynthesis via DAP pathway; DL-2,6-diaminopimelate from LL-2,6-diaminopimelate: step 1/1. Its function is as follows. Catalyzes the stereoinversion of LL-2,6-diaminopimelate (L,L-DAP) to meso-diaminopimelate (meso-DAP), a precursor of L-lysine and an essential component of the bacterial peptidoglycan. The polypeptide is Diaminopimelate epimerase (Shewanella baltica (strain OS223)).